Here is a 357-residue protein sequence, read N- to C-terminus: Peptide chain release factor 1 (357 aa).

N5-methylglutamine is present on Q236.

It belongs to the prokaryotic/mitochondrial release factor family. Post-translationally, methylated by PrmC. Methylation increases the termination efficiency of RF1.

It is found in the cytoplasm. Peptide chain release factor 1 directs the termination of translation in response to the peptide chain termination codons UAG and UAA. The sequence is that of Peptide chain release factor 1 from Mycolicibacterium paratuberculosis (strain ATCC BAA-968 / K-10) (Mycobacterium paratuberculosis).